The following is a 351-amino-acid chain: Phosphate acyltransferase (351 aa).

This sequence belongs to the PlsX family. Homodimer. Probably interacts with PlsY.

The protein localises to the cytoplasm. The catalysed reaction is a fatty acyl-[ACP] + phosphate = an acyl phosphate + holo-[ACP]. It participates in lipid metabolism; phospholipid metabolism. Catalyzes the reversible formation of acyl-phosphate (acyl-PO(4)) from acyl-[acyl-carrier-protein] (acyl-ACP). This enzyme utilizes acyl-ACP as fatty acyl donor, but not acyl-CoA. The protein is Phosphate acyltransferase of Verminephrobacter eiseniae (strain EF01-2).